A 292-amino-acid polypeptide reads, in one-letter code: tRNA pseudouridine synthase B (292 aa).

The active-site Nucleophile is the D38.

This sequence belongs to the pseudouridine synthase TruB family. Type 1 subfamily.

The catalysed reaction is uridine(55) in tRNA = pseudouridine(55) in tRNA. In terms of biological role, responsible for synthesis of pseudouridine from uracil-55 in the psi GC loop of transfer RNAs. The sequence is that of tRNA pseudouridine synthase B from Streptococcus sanguinis (strain SK36).